The primary structure comprises 267 residues: Phosphatidylcholine synthase (267 aa).

Topologically, residues 1–42 (MILWRIVRPGAAMAYVQTGLVLIAEAMDTQQDSLKPRPAMRA) are cytoplasmic. Residues 43-63 (AAFSVHVFTAFGAAIALLAML) form a helical membrane-spanning segment. Residues 64-69 (EAVREH) are Periplasmic-facing. Residues 70 to 90 (WAAMFQWLGVALIIDAIDGPI) traverse the membrane as a helical segment. Topologically, residues 91–102 (ARRLDVKNVQPN) are cytoplasmic. The chain crosses the membrane as a helical span at residues 103 to 123 (WSGDVLDLVVDFVTYVFVPAY). A topological domain (periplasmic) is located at residue Ala-124. Residues 125–145 (IVASGLLLPVAAPLLGVAIIV) form a helical membrane-spanning segment. Residues 146–162 (TSALYFADLRMKADDNH) are Cytoplasmic-facing. Residues 163 to 183 (FRGFPALWNAAAFYLFLLHWP) form a helical membrane-spanning segment. Residue Pro-184 is a topological domain, periplasmic. The helical transmembrane segment at 185-205 (LWSTLLVAALVVLTFVPFHVL) threads the bilayer. Residues 206–215 (HPVRVVRLRW) are Cytoplasmic-facing. The helical transmembrane segment at 216 to 236 (LTMSLIGIWAVLSLYTLDMDF) threads the bilayer. Residues 237-239 (RVG) lie on the Periplasmic side of the membrane. A helical membrane pass occupies residues 240 to 260 (PGVTLALCAIALWISFSDALI). Over 261 to 267 (RFARSFA) the chain is Cytoplasmic.

It belongs to the CDP-alcohol phosphatidyltransferase class-I family. It depends on Mn(2+) as a cofactor.

It is found in the cell inner membrane. It carries out the reaction a CDP-1,2-diacyl-sn-glycerol + choline = a 1,2-diacyl-sn-glycero-3-phosphocholine + CMP + H(+). In terms of biological role, condenses choline with CDP-diglyceride to produce phosphatidylcholine and CMP. This Bradyrhizobium diazoefficiens (strain JCM 10833 / BCRC 13528 / IAM 13628 / NBRC 14792 / USDA 110) protein is Phosphatidylcholine synthase.